The following is a 404-amino-acid chain: L-cysteine:1D-myo-inositol 2-amino-2-deoxy-alpha-D-glucopyranoside ligase (404 aa).

Cys-47 contacts Zn(2+). L-cysteinyl-5'-AMP contacts are provided by residues 47-50, Thr-62, and 85-87; these read CGIT and NIT. Residues 49–59 carry the 'HIGH' region motif; that stretch reads ITPYDSTHLGH. A 'ERGGDP' region motif is present at residues 188-193; the sequence is ERGGDP. Trp-228 serves as a coordination point for L-cysteinyl-5'-AMP. Zn(2+) is bound at residue Cys-232. Residue 250–252 coordinates L-cysteinyl-5'-AMP; sequence GSD. His-257 is a binding site for Zn(2+). Residue Ile-284 participates in L-cysteinyl-5'-AMP binding. The 'KMSKS' region motif lies at 290 to 294; that stretch reads KMSKS.

Belongs to the class-I aminoacyl-tRNA synthetase family. MshC subfamily. In terms of assembly, monomer. Zn(2+) serves as cofactor.

It catalyses the reaction 1D-myo-inositol 2-amino-2-deoxy-alpha-D-glucopyranoside + L-cysteine + ATP = 1D-myo-inositol 2-(L-cysteinylamino)-2-deoxy-alpha-D-glucopyranoside + AMP + diphosphate + H(+). Catalyzes the ATP-dependent condensation of GlcN-Ins and L-cysteine to form L-Cys-GlcN-Ins. In Corynebacterium striatum, this protein is L-cysteine:1D-myo-inositol 2-amino-2-deoxy-alpha-D-glucopyranoside ligase.